The sequence spans 78 residues: Mandibular organ-inhibiting hormone 1 (78 aa).

3 disulfide bridges follow: Cys7–Cys44, Cys24–Cys40, and Cys27–Cys53.

It belongs to the arthropod CHH/MIH/GIH/VIH hormone family. Produced by the medulla terminalis X-organ in the eyestalks and transported to the sinus gland where it is stored and released.

Its subcellular location is the secreted. In terms of biological role, represses the synthesis of methyl farnesoate, the precursor of insect juvenile hormone III in the mandibular organ. The polypeptide is Mandibular organ-inhibiting hormone 1 (Cancer pagurus (Rock crab)).